The following is a 142-amino-acid chain: Transcriptional regulator MraZ (142 aa).

2 SpoVT-AbrB domains span residues 5 to 51 and 77 to 120; these read ASSL…PRNE and AMDV…DAAT.

The protein belongs to the MraZ family. Forms oligomers.

The protein resides in the cytoplasm. It is found in the nucleoid. The sequence is that of Transcriptional regulator MraZ from Polaromonas sp. (strain JS666 / ATCC BAA-500).